We begin with the raw amino-acid sequence, 141 residues long: Hemoglobin subunit alpha-D (141 aa).

The Globin domain occupies 1–141; it reads MLTADDKKLI…VAAVLAEKYR (141 aa). Positions 58 and 87 each coordinate heme b.

It belongs to the globin family. In terms of assembly, heterotetramer of two alpha-D chains and two beta chains. Red blood cells.

In terms of biological role, involved in oxygen transport from the lung to the various peripheral tissues. The chain is Hemoglobin subunit alpha-D (HBAD) from Struthio camelus (Common ostrich).